A 179-amino-acid chain; its full sequence is Cell division protein ZapC (179 aa).

This sequence belongs to the ZapC family. Interacts directly with FtsZ.

It is found in the cytoplasm. Functionally, contributes to the efficiency of the cell division process by stabilizing the polymeric form of the cell division protein FtsZ. Acts by promoting interactions between FtsZ protofilaments and suppressing the GTPase activity of FtsZ. The chain is Cell division protein ZapC from Photobacterium profundum (strain SS9).